A 371-amino-acid chain; its full sequence is Leu/Ile/Val-binding protein homolog 1 (371 aa).

A signal peptide spans 1 to 23; the sequence is MRKTLFSGVALAAVIAFGGSAWA.

The protein belongs to the leucine-binding protein family.

Component of an amino-acid transport system. The protein is Leu/Ile/Val-binding protein homolog 1 of Brucella suis biovar 1 (strain 1330).